We begin with the raw amino-acid sequence, 183 residues long: Heavy metal-associated isoprenylated plant protein 44 (183 aa).

The HMA domain maps to 50 to 113; that stretch reads LQTVELKVRM…AVRRAGKRAE (64 aa). A metal cation is bound by residues C61 and C64. At C180 the chain carries Cysteine methyl ester. C180 is lipidated: S-farnesyl cysteine. A propeptide spans 181 to 183 (removed in mature form); the sequence is RLM.

It belongs to the HIPP family.

Functionally, heavy-metal-binding protein. The protein is Heavy metal-associated isoprenylated plant protein 44 of Arabidopsis thaliana (Mouse-ear cress).